We begin with the raw amino-acid sequence, 507 residues long: Glutamyl-tRNA(Gln) amidotransferase subunit A, mitochondrial (507 aa).

Active-site charge relay system residues include Lys79 and Ser160. Ser184 acts as the Acyl-ester intermediate in catalysis.

Belongs to the amidase family. GatA subfamily. Subunit of the heterotrimeric GatCAB amidotransferase (AdT) complex, composed of A, B and C subunits.

The protein localises to the mitochondrion. It carries out the reaction L-glutamyl-tRNA(Gln) + L-glutamine + ATP + H2O = L-glutaminyl-tRNA(Gln) + L-glutamate + ADP + phosphate + H(+). Its function is as follows. Allows the formation of correctly charged Gln-tRNA(Gln) through the transamidation of misacylated Glu-tRNA(Gln) in the mitochondria. The reaction takes place in the presence of glutamine and ATP through an activated gamma-phospho-Glu-tRNA(Gln). This is Glutamyl-tRNA(Gln) amidotransferase subunit A, mitochondrial from Drosophila pseudoobscura pseudoobscura (Fruit fly).